The chain runs to 462 residues: Fumarate hydratase class II (462 aa).

Substrate is bound by residues 98-100, Arg126, 129-132, 139-141, and Thr187; these read SGT, HPND, and SSN. The disordered stretch occupies residues 120–141; it reads GTRGKGRKVHPNDHVNKGQSSN. The active-site Proton donor/acceptor is the His188. Residue Ser318 is part of the active site. Residues Ser319 and 324–326 each bind substrate; that span reads KVN.

This sequence belongs to the class-II fumarase/aspartase family. Fumarase subfamily. As to quaternary structure, homotetramer.

It localises to the cytoplasm. The enzyme catalyses (S)-malate = fumarate + H2O. Its pathway is carbohydrate metabolism; tricarboxylic acid cycle; (S)-malate from fumarate: step 1/1. Functionally, involved in the TCA cycle. Catalyzes the stereospecific interconversion of fumarate to L-malate. In Nitrosomonas europaea (strain ATCC 19718 / CIP 103999 / KCTC 2705 / NBRC 14298), this protein is Fumarate hydratase class II.